Consider the following 393-residue polypeptide: tRNA(Met) cytidine acetate ligase (393 aa).

Residues glycine 81, asparagine 142, and arginine 167 each contribute to the ATP site.

This sequence belongs to the TmcAL family.

It localises to the cytoplasm. It catalyses the reaction cytidine(34) in elongator tRNA(Met) + acetate + ATP = N(4)-acetylcytidine(34) in elongator tRNA(Met) + AMP + diphosphate. Its function is as follows. Catalyzes the formation of N(4)-acetylcytidine (ac(4)C) at the wobble position of elongator tRNA(Met), using acetate and ATP as substrates. First activates an acetate ion to form acetyladenylate (Ac-AMP) and then transfers the acetyl group to tRNA to form ac(4)C34. The polypeptide is tRNA(Met) cytidine acetate ligase (Bacillus cereus (strain 03BB102)).